We begin with the raw amino-acid sequence, 459 residues long: Bifunctional protein GlmU (459 aa).

The tract at residues 1–230 (MSNRFAVILA…FDETLGVNDR (230 aa)) is pyrophosphorylase. UDP-N-acetyl-alpha-D-glucosamine contacts are provided by residues 9–12 (LAAG), Lys23, Gln73, and 78–79 (GT). Asp103 is a binding site for Mg(2+). Positions 140, 155, 170, and 228 each coordinate UDP-N-acetyl-alpha-D-glucosamine. Position 228 (Asn228) interacts with Mg(2+). The segment at 231-251 (VALSQAEIIMKNRINRKNMVN) is linker. Residues 252 to 459 (GVTIIDPSNT…VDQLLNKKKS (208 aa)) are N-acetyltransferase. Positions 333 and 351 each coordinate UDP-N-acetyl-alpha-D-glucosamine. The active-site Proton acceptor is His363. Positions 366 and 377 each coordinate UDP-N-acetyl-alpha-D-glucosamine. Acetyl-CoA-binding positions include 386–387 (NY), Ala423, and Arg440.

This sequence in the N-terminal section; belongs to the N-acetylglucosamine-1-phosphate uridyltransferase family. In the C-terminal section; belongs to the transferase hexapeptide repeat family. In terms of assembly, homotrimer. It depends on Mg(2+) as a cofactor.

It is found in the cytoplasm. The catalysed reaction is alpha-D-glucosamine 1-phosphate + acetyl-CoA = N-acetyl-alpha-D-glucosamine 1-phosphate + CoA + H(+). It carries out the reaction N-acetyl-alpha-D-glucosamine 1-phosphate + UTP + H(+) = UDP-N-acetyl-alpha-D-glucosamine + diphosphate. The protein operates within nucleotide-sugar biosynthesis; UDP-N-acetyl-alpha-D-glucosamine biosynthesis; N-acetyl-alpha-D-glucosamine 1-phosphate from alpha-D-glucosamine 6-phosphate (route II): step 2/2. It functions in the pathway nucleotide-sugar biosynthesis; UDP-N-acetyl-alpha-D-glucosamine biosynthesis; UDP-N-acetyl-alpha-D-glucosamine from N-acetyl-alpha-D-glucosamine 1-phosphate: step 1/1. Its pathway is bacterial outer membrane biogenesis; LPS lipid A biosynthesis. Functionally, catalyzes the last two sequential reactions in the de novo biosynthetic pathway for UDP-N-acetylglucosamine (UDP-GlcNAc). The C-terminal domain catalyzes the transfer of acetyl group from acetyl coenzyme A to glucosamine-1-phosphate (GlcN-1-P) to produce N-acetylglucosamine-1-phosphate (GlcNAc-1-P), which is converted into UDP-GlcNAc by the transfer of uridine 5-monophosphate (from uridine 5-triphosphate), a reaction catalyzed by the N-terminal domain. In Bacillus mycoides (strain KBAB4) (Bacillus weihenstephanensis), this protein is Bifunctional protein GlmU.